Consider the following 445-residue polypeptide: FAS-associated factor 2 (445 aa).

A UBA domain is found at E12–E53. A coiled-coil region spans residues S275–E353. Positions A303–E348 are enriched in basic and acidic residues. The tract at residues A303 to P354 is disordered. Residues D357–V439 form the UBX domain.

It is found in the cytoplasm. Its subcellular location is the lipid droplet. The protein resides in the endoplasmic reticulum. Plays an important role in endoplasmic reticulum-associated degradation (ERAD) that mediates ubiquitin-dependent degradation of misfolded endoplasmic reticulum proteins. Involved in inhibition of lipid droplet degradation. Involved in stress granule disassembly. The chain is FAS-associated factor 2 (faf2) from Xenopus tropicalis (Western clawed frog).